We begin with the raw amino-acid sequence, 315 residues long: Methionyl-tRNA formyltransferase (315 aa).

Residue 115 to 118 (SLLP) participates in (6S)-5,6,7,8-tetrahydrofolate binding.

It belongs to the Fmt family.

The enzyme catalyses L-methionyl-tRNA(fMet) + (6R)-10-formyltetrahydrofolate = N-formyl-L-methionyl-tRNA(fMet) + (6S)-5,6,7,8-tetrahydrofolate + H(+). Functionally, attaches a formyl group to the free amino group of methionyl-tRNA(fMet). The formyl group appears to play a dual role in the initiator identity of N-formylmethionyl-tRNA by promoting its recognition by IF2 and preventing the misappropriation of this tRNA by the elongation apparatus. The polypeptide is Methionyl-tRNA formyltransferase (Dehalococcoides mccartyi (strain ATCC BAA-2100 / JCM 16839 / KCTC 5957 / BAV1)).